A 415-amino-acid chain; its full sequence is Gamma-glutamyl phosphate reductase (415 aa).

The protein belongs to the gamma-glutamyl phosphate reductase family.

It localises to the cytoplasm. The catalysed reaction is L-glutamate 5-semialdehyde + phosphate + NADP(+) = L-glutamyl 5-phosphate + NADPH + H(+). Its pathway is amino-acid biosynthesis; L-proline biosynthesis; L-glutamate 5-semialdehyde from L-glutamate: step 2/2. Its function is as follows. Catalyzes the NADPH-dependent reduction of L-glutamate 5-phosphate into L-glutamate 5-semialdehyde and phosphate. The product spontaneously undergoes cyclization to form 1-pyrroline-5-carboxylate. This chain is Gamma-glutamyl phosphate reductase, found in Bacillus mycoides (strain KBAB4) (Bacillus weihenstephanensis).